Reading from the N-terminus, the 719-residue chain is Putative alpha-1,3-mannosyltransferase MNT4 (719 aa).

At M1–H4 the chain is on the cytoplasmic side. The helical transmembrane segment at L5–F22 threads the bilayer. Residues R23 to D719 lie on the Lumenal side of the membrane. N148, N273, and N449 each carry an N-linked (GlcNAc...) asparagine glycan.

It belongs to the MNN1/MNT family.

The protein resides in the golgi apparatus membrane. The protein operates within protein modification; protein glycosylation. Functionally, responsible for addition of the terminal mannose residues to the outer chain of core N-linked polysaccharides and to O-linked mannotriose. Implicated in late Golgi modifications. This chain is Putative alpha-1,3-mannosyltransferase MNT4 (MNT4), found in Candida albicans (strain SC5314 / ATCC MYA-2876) (Yeast).